Consider the following 140-residue polypeptide: Nucleoside diphosphate kinase (140 aa).

Residues Lys11, Phe59, Arg87, Thr93, Arg104, and Asn114 each contribute to the ATP site. The active-site Pros-phosphohistidine intermediate is the His117.

It belongs to the NDK family. As to quaternary structure, homotetramer. Mg(2+) is required as a cofactor.

It is found in the cytoplasm. It carries out the reaction a 2'-deoxyribonucleoside 5'-diphosphate + ATP = a 2'-deoxyribonucleoside 5'-triphosphate + ADP. The enzyme catalyses a ribonucleoside 5'-diphosphate + ATP = a ribonucleoside 5'-triphosphate + ADP. Its function is as follows. Major role in the synthesis of nucleoside triphosphates other than ATP. The ATP gamma phosphate is transferred to the NDP beta phosphate via a ping-pong mechanism, using a phosphorylated active-site intermediate. This Sinorhizobium fredii (strain NBRC 101917 / NGR234) protein is Nucleoside diphosphate kinase.